The chain runs to 197 residues: dITP/XTP pyrophosphatase (197 aa).

8–13 (TGNAGK) is a binding site for substrate. The Mg(2+) site is built by Glu40 and Asp69. Asp69 (proton acceptor) is an active-site residue. Substrate-binding positions include Ser70, 154–157 (FGYD), Lys177, and 182–183 (HR).

This sequence belongs to the HAM1 NTPase family. In terms of assembly, homodimer. Mg(2+) is required as a cofactor.

The enzyme catalyses XTP + H2O = XMP + diphosphate + H(+). It catalyses the reaction dITP + H2O = dIMP + diphosphate + H(+). It carries out the reaction ITP + H2O = IMP + diphosphate + H(+). Its function is as follows. Pyrophosphatase that catalyzes the hydrolysis of nucleoside triphosphates to their monophosphate derivatives, with a high preference for the non-canonical purine nucleotides XTP (xanthosine triphosphate), dITP (deoxyinosine triphosphate) and ITP. Seems to function as a house-cleaning enzyme that removes non-canonical purine nucleotides from the nucleotide pool, thus preventing their incorporation into DNA/RNA and avoiding chromosomal lesions. The sequence is that of dITP/XTP pyrophosphatase (rdgB) from Salmonella paratyphi A (strain ATCC 9150 / SARB42).